Here is a 381-residue protein sequence, read N- to C-terminus: 1-deoxy-D-xylulose 5-phosphate reductoisomerase (381 aa).

NADPH-binding residues include threonine 10, glycine 11, serine 12, isoleucine 13, glycine 36, lysine 37, asparagine 38, and asparagine 122. Residue lysine 123 participates in 1-deoxy-D-xylulose 5-phosphate binding. Glutamate 124 lines the NADPH pocket. Aspartate 148 serves as a coordination point for Mn(2+). 1-deoxy-D-xylulose 5-phosphate contacts are provided by serine 149, glutamate 150, serine 173, and histidine 196. Glutamate 150 contributes to the Mn(2+) binding site. An NADPH-binding site is contributed by glycine 202. 1-deoxy-D-xylulose 5-phosphate is bound by residues serine 209, asparagine 214, lysine 215, and glutamate 218. Glutamate 218 serves as a coordination point for Mn(2+).

The protein belongs to the DXR family. It depends on Mg(2+) as a cofactor. Mn(2+) serves as cofactor.

The catalysed reaction is 2-C-methyl-D-erythritol 4-phosphate + NADP(+) = 1-deoxy-D-xylulose 5-phosphate + NADPH + H(+). The protein operates within isoprenoid biosynthesis; isopentenyl diphosphate biosynthesis via DXP pathway; isopentenyl diphosphate from 1-deoxy-D-xylulose 5-phosphate: step 1/6. Its function is as follows. Catalyzes the NADPH-dependent rearrangement and reduction of 1-deoxy-D-xylulose-5-phosphate (DXP) to 2-C-methyl-D-erythritol 4-phosphate (MEP). The sequence is that of 1-deoxy-D-xylulose 5-phosphate reductoisomerase from Desulfitobacterium hafniense (strain Y51).